The primary structure comprises 267 residues: Phosphate import ATP-binding protein PstB (267 aa).

Residues 12 to 251 (VSLDNVSIRY…EFDKTKNMFN (240 aa)) enclose the ABC transporter domain. An ATP-binding site is contributed by 44–51 (GPSGCGKS).

Belongs to the ABC transporter superfamily. Phosphate importer (TC 3.A.1.7) family. In terms of assembly, the complex is composed of two ATP-binding proteins (PstB), two transmembrane proteins (PstC and PstA) and a solute-binding protein (PstS).

It localises to the cell inner membrane. The catalysed reaction is phosphate(out) + ATP + H2O = ADP + 2 phosphate(in) + H(+). Its function is as follows. Part of the ABC transporter complex PstSACB involved in phosphate import. Responsible for energy coupling to the transport system. This chain is Phosphate import ATP-binding protein PstB, found in Prochlorococcus marinus (strain NATL2A).